An 88-amino-acid polypeptide reads, in one-letter code: Cell division topological specificity factor (88 aa).

The protein belongs to the MinE family.

In terms of biological role, prevents the cell division inhibition by proteins MinC and MinD at internal division sites while permitting inhibition at polar sites. This ensures cell division at the proper site by restricting the formation of a division septum at the midpoint of the long axis of the cell. This is Cell division topological specificity factor from Psychromonas ingrahamii (strain DSM 17664 / CCUG 51855 / 37).